Reading from the N-terminus, the 330-residue chain is D-cysteine desulfhydrase (330 aa).

Lys-52 is modified (N6-(pyridoxal phosphate)lysine).

This sequence belongs to the ACC deaminase/D-cysteine desulfhydrase family. As to quaternary structure, homodimer. Pyridoxal 5'-phosphate is required as a cofactor.

It carries out the reaction D-cysteine + H2O = hydrogen sulfide + pyruvate + NH4(+) + H(+). Catalyzes the alpha,beta-elimination reaction of D-cysteine and of several D-cysteine derivatives. It could be a defense mechanism against D-cysteine. The chain is D-cysteine desulfhydrase from Yersinia pseudotuberculosis serotype O:1b (strain IP 31758).